Here is a 174-residue protein sequence, read N- to C-terminus: RNA polymerase sigma factor CarQ (174 aa).

The Polymerase core binding motif lies at 39–52; the sequence is DLLQATFLSVIRSR. Residues 86–106 are disordered; sequence YASREDTATPASAAPDDSDPS. The segment at residues 136–155 is a DNA-binding region (H-T-H motif); that stretch reads FEEIGALRGISPGAARLRAH.

The protein belongs to the sigma-70 factor family. ECF subfamily.

Sigma factors are initiation factors that promote the attachment of RNA polymerase to specific initiation sites and are then released. This sigma factor regulates genes for the light induced biosynthesis of carotenoids. The sequence is that of RNA polymerase sigma factor CarQ (carQ) from Myxococcus xanthus.